The sequence spans 1249 residues: Clustered mitochondria protein homolog (1249 aa).

The disordered stretch occupies residues 1–34 (MAQTNGELEHSKAETPEQLTNGNHPEETQEEEQN). The Clu domain maps to 321–565 (DITRSQENYL…RVTPLDVMWQ (245 aa)). Disordered stretches follow at residues 610-638 (VETASKEKSEENAESKEEGSEEKSEEALD) and 874-907 (VPATNGASQEEGKKKKKKGGDSKSPARAASPEKP). Over residues 613-638 (ASKEKSEENAESKEEGSEEKSEEALD) the composition is skewed to basic and acidic residues. TPR repeat units lie at residues 975-1008 (AKLYHQLSMLYYQTDEKEAAVELARKAVIVTERT), 1017-1050 (ILSYLNLSLFEHASGNTKTALVYIKHAMDLWKII), and 1059-1092 (ITTMNNAAVMLQHLKQYSDSRKWFEASLTVCESL). Residues 1178–1191 (TRTLGTKVQPQVGQ) show a composition bias toward polar residues. The interval 1178-1249 (TRTLGTKVQP…KLRGSKKSSA (72 aa)) is disordered. Positions 1192-1205 (SAPSASGASSANPS) are enriched in low complexity.

Belongs to the CLU family. As to quaternary structure, may associate with the eukaryotic translation initiation factor 3 (eIF-3) complex.

It is found in the cytoplasm. In terms of biological role, mRNA-binding protein involved in proper cytoplasmic distribution of mitochondria. This Aspergillus oryzae (strain ATCC 42149 / RIB 40) (Yellow koji mold) protein is Clustered mitochondria protein homolog.